The following is a 512-amino-acid chain: DNA damage-binding protein CMR1 (512 aa).

The disordered stretch occupies residues 32–96 (SQIKREAGVE…IPNVNDNQLL (65 aa)). The segment covering 34-46 (IKREAGVEDEHLD) has biased composition (basic and acidic residues). Basic residues predominate over residues 47 to 60 (RKRKKKAGSAKKAV). 7 WD repeats span residues 189–230 (LTAE…PEDE), 241–281 (LFTK…SEEI), 289–329 (DDPL…TEIN), 333–373 (LSDK…NKPE), 390–429 (DSRLSVSAVSYSPMDETLVCNGYDDTIRLFDVSGTLPEDL), 442–481 (GRWTSILKARFKLNMDVFAIANMKRAIDIYTSSGVQLAHL), and 482–512 (PTATVPAVISWHPTQNWVVGGNSSGKAFLFT).

Belongs to the WD repeat DDB2/WDR76 family.

DNA-binding protein that binds to both single- and double-stranded DNA. Binds preferentially to UV-damaged DNA. May be involved in DNA-metabolic processes. In Kluyveromyces lactis (strain ATCC 8585 / CBS 2359 / DSM 70799 / NBRC 1267 / NRRL Y-1140 / WM37) (Yeast), this protein is DNA damage-binding protein CMR1.